We begin with the raw amino-acid sequence, 108 residues long: UPF0060 membrane protein sll0793 (108 aa).

4 helical membrane-spanning segments follow: residues Leu-7–Ile-27, Ser-32–Leu-52, Tyr-64–Val-84, and Arg-86–Asn-106.

Belongs to the UPF0060 family.

Its subcellular location is the cell inner membrane. This chain is UPF0060 membrane protein sll0793, found in Synechocystis sp. (strain ATCC 27184 / PCC 6803 / Kazusa).